Here is a 435-residue protein sequence, read N- to C-terminus: UDP-glucuronic acid decarboxylase 1 (435 aa).

The segment at 1–33 (MKQLHKQMSSKRDEETIPMSQSSPYSPKTLKHP) is disordered. Topologically, residues 1 to 48 (MKQLHKQMSSKRDEETIPMSQSSPYSPKTLKHPRSLPRSLHYLFREQR) are cytoplasmic. The helical; Signal-anchor for type II membrane protein transmembrane segment at 49 to 69 (LLFILVGILIGSTFFILQPSL) threads the bilayer. Topologically, residues 70 to 435 (SRLGAAESTS…ILNEDEGKGL (366 aa)) are lumenal. Positions 91 to 100 (DSPPSRSTFN) are enriched in polar residues. Positions 91-110 (DSPPSRSTFNSGGGGGRTGR) are disordered. Positions 129, 130, 131, 150, 151, 153, 154, 155, 175, and 176 each coordinate NAD(+). Ile180 provides a ligand contact to UDP-alpha-D-glucuronate. Leu190 serves as a coordination point for NAD(+). A UDP-alpha-D-glucuronate-binding site is contributed by Lys208. Thr209 is an NAD(+) binding site. UDP-alpha-D-glucuronate-binding residues include Asn216, Gly219, Lys222, and Arg223. NAD(+) is bound by residues Tyr262 and Lys266. Residue Tyr262 is the Proton acceptor of the active site. Tyr276 serves as a coordination point for UDP-alpha-D-glucuronate. 2 residues coordinate NAD(+): Thr292 and Arg303. Positions 380 to 401 (EFKPNTADDPHKRKPDISKAKE) are disordered. Residues 385 to 401 (TADDPHKRKPDISKAKE) are compositionally biased toward basic and acidic residues.

Belongs to the NAD(P)-dependent epimerase/dehydratase family. UDP-glucuronic acid decarboxylase subfamily. Requires NAD(+) as cofactor. Ubiquitous.

Its subcellular location is the golgi apparatus. The protein localises to the golgi stack membrane. The catalysed reaction is UDP-alpha-D-glucuronate + H(+) = UDP-alpha-D-xylose + CO2. It functions in the pathway nucleotide-sugar biosynthesis; UDP-alpha-D-xylose biosynthesis; UDP-alpha-D-xylose from UDP-alpha-D-glucuronate: step 1/1. In terms of biological role, catalyzes the NAD-dependent decarboxylation of UDP-glucuronic acid to UDP-xylose. Necessary for the biosynthesis of the core tetrasaccharide in glycosaminoglycan biosynthesis. This chain is UDP-glucuronic acid decarboxylase 1, found in Arabidopsis thaliana (Mouse-ear cress).